The primary structure comprises 101 residues: Putative defensin-like protein 86 (101 aa).

Residues 1–27 form the signal peptide; the sequence is MAITKMSSLIILSLMMLTFIYIPMISG. Disulfide bonds link C35–C71, C39–C59, C45–C69, and C49–C70.

This sequence belongs to the DEFL family.

The protein resides in the secreted. The chain is Putative defensin-like protein 86 (LCR82) from Arabidopsis thaliana (Mouse-ear cress).